Consider the following 95-residue polypeptide: Aspartyl/glutamyl-tRNA(Asn/Gln) amidotransferase subunit C (95 aa).

Belongs to the GatC family. In terms of assembly, heterotrimer of A, B and C subunits.

The enzyme catalyses L-glutamyl-tRNA(Gln) + L-glutamine + ATP + H2O = L-glutaminyl-tRNA(Gln) + L-glutamate + ADP + phosphate + H(+). It catalyses the reaction L-aspartyl-tRNA(Asn) + L-glutamine + ATP + H2O = L-asparaginyl-tRNA(Asn) + L-glutamate + ADP + phosphate + 2 H(+). In terms of biological role, allows the formation of correctly charged Asn-tRNA(Asn) or Gln-tRNA(Gln) through the transamidation of misacylated Asp-tRNA(Asn) or Glu-tRNA(Gln) in organisms which lack either or both of asparaginyl-tRNA or glutaminyl-tRNA synthetases. The reaction takes place in the presence of glutamine and ATP through an activated phospho-Asp-tRNA(Asn) or phospho-Glu-tRNA(Gln). The sequence is that of Aspartyl/glutamyl-tRNA(Asn/Gln) amidotransferase subunit C from Pseudomonas fluorescens (strain ATCC BAA-477 / NRRL B-23932 / Pf-5).